The following is a 323-amino-acid chain: MDPKGWCEKLNDGHVIPVLGFGTYAPEEVPKSRTVEVTKLAIDAGFRHIDSAYSYNNEKEVGQAIRSKIEDGTVKREDIFYTSKLWLTFLRPELVRPALEKSLTNLQLDYVDLYIIHFPIALKPGEELFPEDEHGKLIFDTVDLCATWEAMEKCKDAGLAKSIGVSNFNRRQLEMILNKPGLKYKPVCNQVECHPYLNQSKLLDFCKSKDIVLVAYGALGTQRLKRWLAPNSPVLLEDPVLCAMAKKYKRTPALIALRYLLQRGVVVLAKSYNEKRIKENMQVFEFQLTSEDMKDLDGLNRNHRFLPLQIAVDHPEYPFADEY.

20 to 24 (GFGTY) contacts NADP(+). Position 31 (Lys-31) interacts with substrate. Asp-50 is a binding site for NADP(+). The Proton donor role is filled by Tyr-55. Residue His-117 coordinates substrate. Residues 166–167 (SN), Gln-190, 216–222 (YGALGTQ), and 270–280 (KSYNEKRIKEN) each bind NADP(+).

Belongs to the aldo/keto reductase family. As to quaternary structure, monomer. In terms of tissue distribution, detected in endometrium surface epithelium (at protein level). Detected in endometrium.

The protein localises to the cytoplasm. Its function is as follows. NADP-dependent oxidoreductase involved in steroid metabolism. May act on various hydroxysteroids. This Equus caballus (Horse) protein is Aldo-keto reductase family 1 member C23-like protein (PGFS).